Here is a 231-residue protein sequence, read N- to C-terminus: MQVNLEDVKIEPSWKEALKGEFLSLYFGDIKEKLICAKRAGIVYPPSNLIFNAFNLTPFDTVKVVILGQDPYHGPNQAMGLSFSVPNGVRIPPSLVNIYKEIYDDLGIREPNSGDLTYWAKQGVLLLNASLTVGANMANSHSGFGWQIFTDAVIKILSRERENIVFLLWGNPAKAKIPLIDTNKHLVLTAAHPSPLARGAFFGCRHFSKTNFYLTQHAKTPIDWDLNNFQI.

Aspartate 70 functions as the Proton acceptor in the catalytic mechanism.

The protein belongs to the uracil-DNA glycosylase (UDG) superfamily. UNG family.

It is found in the cytoplasm. The catalysed reaction is Hydrolyzes single-stranded DNA or mismatched double-stranded DNA and polynucleotides, releasing free uracil.. Functionally, excises uracil residues from the DNA which can arise as a result of misincorporation of dUMP residues by DNA polymerase or due to deamination of cytosine. The polypeptide is Uracil-DNA glycosylase (Campylobacter curvus (strain 525.92)).